The primary structure comprises 446 residues: N-succinylarginine dihydrolase 2 (446 aa).

Residues 20 to 29, Asn-111, and 138 to 139 contribute to the substrate site; these read VGLSPGNLAS and HR. Glu-175 is a catalytic residue. Residue Arg-212 coordinates substrate. The active site involves His-246. Substrate is bound by residues Asp-248 and Asn-361. Cys-367 acts as the Nucleophile in catalysis.

It belongs to the succinylarginine dihydrolase family. As to quaternary structure, homodimer.

It carries out the reaction N(2)-succinyl-L-arginine + 2 H2O + 2 H(+) = N(2)-succinyl-L-ornithine + 2 NH4(+) + CO2. Its pathway is amino-acid degradation; L-arginine degradation via AST pathway; L-glutamate and succinate from L-arginine: step 2/5. Catalyzes the hydrolysis of N(2)-succinylarginine into N(2)-succinylornithine, ammonia and CO(2). The protein is N-succinylarginine dihydrolase 2 of Caulobacter vibrioides (strain ATCC 19089 / CIP 103742 / CB 15) (Caulobacter crescentus).